Here is a 238-residue protein sequence, read N- to C-terminus: RNA pyrophosphohydrolase (238 aa).

The Nudix hydrolase domain maps to 6-149 (GFRPNVGIIL…KREVYQMALS (144 aa)). The short motif at 38 to 59 (GGIKYGETPEQAMYRELHEEVG) is the Nudix box element. Residues 161–238 (APLSPYGRGG…PDDTPSKDSL (78 aa)) form a disordered region. Basic and acidic residues predominate over residues 171–181 (PHRERDGRDNR). Polar residues predominate over residues 188–199 (RNDQNTRGQRQP). Over residues 204–217 (VTTSTVIVETVITS) the composition is skewed to low complexity.

This sequence belongs to the Nudix hydrolase family. RppH subfamily. The cofactor is a divalent metal cation.

Its function is as follows. Accelerates the degradation of transcripts by removing pyrophosphate from the 5'-end of triphosphorylated RNA, leading to a more labile monophosphorylated state that can stimulate subsequent ribonuclease cleavage. The polypeptide is RNA pyrophosphohydrolase (Ralstonia nicotianae (strain ATCC BAA-1114 / GMI1000) (Ralstonia solanacearum)).